A 182-amino-acid chain; its full sequence is uncharacterized protein (182 aa).

This sequence to H.pylori HP0274.

This is an uncharacterized protein from Methanocaldococcus jannaschii (strain ATCC 43067 / DSM 2661 / JAL-1 / JCM 10045 / NBRC 100440) (Methanococcus jannaschii).